A 46-amino-acid polypeptide reads, in one-letter code: Photosystem II reaction center protein K (46 aa).

The propeptide occupies 1–9; the sequence is MTTLALVLA. The helical transmembrane segment at 18 to 38 threads the bilayer; it reads FAPIVDVLPVIPVFFILLAFV.

The protein belongs to the PsbK family. As to quaternary structure, PSII is composed of 1 copy each of membrane proteins PsbA, PsbB, PsbC, PsbD, PsbE, PsbF, PsbH, PsbI, PsbJ, PsbK, PsbL, PsbM, PsbT, PsbX, PsbY, PsbZ, Psb30/Ycf12, at least 3 peripheral proteins of the oxygen-evolving complex and a large number of cofactors. It forms dimeric complexes. This protein is tightly associated with CP43 (psbC), one of the core proteins.

Its subcellular location is the plastid. It is found in the chloroplast thylakoid membrane. In terms of biological role, one of the components of the core complex of photosystem II (PSII). PSII is a light-driven water:plastoquinone oxidoreductase that uses light energy to abstract electrons from H(2)O, generating O(2) and a proton gradient subsequently used for ATP formation. It consists of a core antenna complex that captures photons, and an electron transfer chain that converts photonic excitation into a charge separation. Required for assembly and/or stability of PSII. The sequence is that of Photosystem II reaction center protein K from Chlamydomonas reinhardtii (Chlamydomonas smithii).